We begin with the raw amino-acid sequence, 225 residues long: Lipoprotein-releasing system ATP-binding protein LolD (225 aa).

The region spanning 5–225 is the ABC transporter domain; the sequence is LEVMDLTKGY…RLVDGRVVAD (221 aa). Position 41–48 (41–48) interacts with ATP; it reads GASGTGKS.

This sequence belongs to the ABC transporter superfamily. Lipoprotein translocase (TC 3.A.1.125) family. As to quaternary structure, the complex is composed of two ATP-binding proteins (LolD) and two transmembrane proteins (LolC and LolE).

The protein resides in the cell inner membrane. In terms of biological role, part of the ABC transporter complex LolCDE involved in the translocation of mature outer membrane-directed lipoproteins, from the inner membrane to the periplasmic chaperone, LolA. Responsible for the formation of the LolA-lipoprotein complex in an ATP-dependent manner. In Geobacter metallireducens (strain ATCC 53774 / DSM 7210 / GS-15), this protein is Lipoprotein-releasing system ATP-binding protein LolD.